The chain runs to 216 residues: Adenylate kinase (216 aa).

An ATP-binding site is contributed by 10–15 (GAGKGT). Residues 30 to 59 (STGDMLRAAVKAGTKLGQQVQGIMAAGKLV) form an NMP region. AMP-binding positions include T31, R36, 57-59 (KLV), 85-88 (GFPR), and Q92. The tract at residues 122–159 (GRRVHMPSGRIYHLKFNPPKITDKDDMTGESLTLRKDD) is LID. ATP-binding positions include R123 and 132-133 (IY). Residues R156 and R167 each contribute to the AMP site. R200 lines the ATP pocket.

It belongs to the adenylate kinase family. As to quaternary structure, monomer.

It is found in the cytoplasm. The catalysed reaction is AMP + ATP = 2 ADP. It participates in purine metabolism; AMP biosynthesis via salvage pathway; AMP from ADP: step 1/1. Catalyzes the reversible transfer of the terminal phosphate group between ATP and AMP. Plays an important role in cellular energy homeostasis and in adenine nucleotide metabolism. This is Adenylate kinase from Hamiltonella defensa subsp. Acyrthosiphon pisum (strain 5AT).